We begin with the raw amino-acid sequence, 143 residues long: Large ribosomal subunit protein uL16c (143 aa).

The protein belongs to the universal ribosomal protein uL16 family. In terms of assembly, part of the 50S ribosomal subunit.

It localises to the plastid. The protein localises to the chloroplast. This Marchantia polymorpha (Common liverwort) protein is Large ribosomal subunit protein uL16c.